The primary structure comprises 118 residues: Ribonuclease P protein component (118 aa).

This sequence belongs to the RnpA family. In terms of assembly, consists of a catalytic RNA component (M1 or rnpB) and a protein subunit.

It catalyses the reaction Endonucleolytic cleavage of RNA, removing 5'-extranucleotides from tRNA precursor.. Functionally, RNaseP catalyzes the removal of the 5'-leader sequence from pre-tRNA to produce the mature 5'-terminus. It can also cleave other RNA substrates such as 4.5S RNA. The protein component plays an auxiliary but essential role in vivo by binding to the 5'-leader sequence and broadening the substrate specificity of the ribozyme. The chain is Ribonuclease P protein component from Ureaplasma urealyticum serovar 10 (strain ATCC 33699 / Western).